Reading from the N-terminus, the 261-residue chain is Imidazole glycerol phosphate synthase subunit HisF (261 aa).

Residues Asp-16 and Asp-135 contribute to the active site.

It belongs to the HisA/HisF family. As to quaternary structure, heterodimer of HisH and HisF.

The protein localises to the cytoplasm. It carries out the reaction 5-[(5-phospho-1-deoxy-D-ribulos-1-ylimino)methylamino]-1-(5-phospho-beta-D-ribosyl)imidazole-4-carboxamide + L-glutamine = D-erythro-1-(imidazol-4-yl)glycerol 3-phosphate + 5-amino-1-(5-phospho-beta-D-ribosyl)imidazole-4-carboxamide + L-glutamate + H(+). Its pathway is amino-acid biosynthesis; L-histidine biosynthesis; L-histidine from 5-phospho-alpha-D-ribose 1-diphosphate: step 5/9. Its function is as follows. IGPS catalyzes the conversion of PRFAR and glutamine to IGP, AICAR and glutamate. The HisF subunit catalyzes the cyclization activity that produces IGP and AICAR from PRFAR using the ammonia provided by the HisH subunit. The sequence is that of Imidazole glycerol phosphate synthase subunit HisF from Mycobacterium sp. (strain JLS).